A 221-amino-acid chain; its full sequence is Alpha-ketoglutarate-dependent dioxygenase alkB homolog 7, mitochondrial (221 aa).

Residues 1–23 (MAGSRRLAMRLLSGCAWVRGSDS) constitute a mitochondrion transit peptide. Residues His-121 and Asp-123 each contribute to the Fe cation site. Residue Tyr-165 participates in 2-oxoglutarate binding. His-177 contributes to the Fe cation binding site. 2-oxoglutarate contacts are provided by residues 197–199 (RIS) and Arg-203.

This sequence belongs to the alkB family. Fe(2+) serves as cofactor. In terms of tissue distribution, widely expressed.

The protein localises to the mitochondrion matrix. Functionally, may function as protein hydroxylase; can catalyze auto-hydroxylation at Leu-110 (in vitro), but this activity may be due to the absence of the true substrate. Required to induce programmed necrosis in response to DNA damage caused by cytotoxic alkylating agents. Acts by triggering the collapse of mitochondrial membrane potential and loss of mitochondrial function that leads to energy depletion and cell death. ALKBH7-mediated necrosis is probably required to prevent the accumulation of cells with DNA damage. Does not display DNA demethylase activity. Involved in fatty acid metabolism. This chain is Alpha-ketoglutarate-dependent dioxygenase alkB homolog 7, mitochondrial (Alkbh7), found in Mus musculus (Mouse).